A 370-amino-acid chain; its full sequence is Lysophosphatidic acid receptor 4 (370 aa).

The Extracellular segment spans residues 1–43 (MGDRRFIDFQFQDLNSSLRPRLGNATANNTCIVDDSFKYNLNG). Asn15, Asn24, and Asn28 each carry an N-linked (GlcNAc...) asparagine glycan. Residues 44-64 (AVYSVVFILGLITNSASLFVF) traverse the membrane as a helical segment. Over 65–73 (CFRMKMRSE) the chain is Cytoplasmic. A helical transmembrane segment spans residues 74 to 94 (TAIFITNLALSDLLFVCTLPF). Over 95–112 (KIFYNFNRHWPFGDTLCK) the chain is Extracellular. Cys111 and Cys188 are disulfide-bonded. Residues 113-133 (ISGTAFLTNIYGSMLFLTCIS) form a helical membrane-spanning segment. The Cytoplasmic portion of the chain corresponds to 134-155 (VDRFLAIVYPFRSRTIRTRRNS). The helical transmembrane segment at 156 to 176 (AIVCAGVWILVLSGGISASLF) threads the bilayer. Over 177–203 (STTNVNNATTTCFEGFSKRVWKTYLSK) the chain is Extracellular. An N-linked (GlcNAc...) asparagine glycan is attached at Asn183. A helical membrane pass occupies residues 204 to 224 (ITIFIEVVGFIIPLILNVSCS). Topologically, residues 225–254 (SVVLRTLRKPATLSQIGTNKKKVLKMITVH) are cytoplasmic. A helical transmembrane segment spans residues 255-275 (MAVFVVCFVPYNSVLFLYALV). Topologically, residues 276–294 (RSQAITNCLLERFAKIMYP) are extracellular. The helical transmembrane segment at 295–315 (ITLCLATLNCCFDPFIYYFTL) threads the bilayer. The Cytoplasmic portion of the chain corresponds to 316–370 (ESFQKSFYINTHIRMESLFKTETPLTPKPSLPAIQEEVSDQTTNNGGELMLESTF).

Belongs to the G-protein coupled receptor 1 family.

The protein resides in the cell membrane. Receptor for lysophosphatidic acid (LPA), a mediator of diverse cellular activities. Transduces a signal by increasing the intracellular calcium ions and by stimulating adenylyl cyclase activity. The rank order of potency for agonists of this receptor is 1-oleoyl- &gt; 1-stearoyl- &gt; 1-palmitoyl- &gt; 1-myristoyl- &gt; 1-alkyl- &gt; 1-alkenyl-LPA. The sequence is that of Lysophosphatidic acid receptor 4 (Lpar4) from Mus musculus (Mouse).